The following is a 351-amino-acid chain: DNA-directed RNA polymerase subunit alpha (351 aa).

The segment at 1 to 245 is alpha N-terminal domain (alpha-NTD); the sequence is MPRRNLLKGF…EHFTVFVNFD (245 aa). Residues 261 to 351 are alpha C-terminal domain (alpha-CTD); that stretch reads AVLELLNTKI…MRQKEEIDEA (91 aa).

Belongs to the RNA polymerase alpha chain family. Homodimer. The RNAP catalytic core consists of 2 alpha, 1 beta, 1 beta' and 1 omega subunit. When a sigma factor is associated with the core the holoenzyme is formed, which can initiate transcription.

The enzyme catalyses RNA(n) + a ribonucleoside 5'-triphosphate = RNA(n+1) + diphosphate. In terms of biological role, DNA-dependent RNA polymerase catalyzes the transcription of DNA into RNA using the four ribonucleoside triphosphates as substrates. The chain is DNA-directed RNA polymerase subunit alpha from Treponema pallidum (strain Nichols).